Consider the following 367-residue polypeptide: MNVLQLMQQHDTMPETYKRLSVEEMEKRVARVKRELGTRLFIPGHHYQKDEVIQFADATGDSLQLAQVAAKNKEAEYIVFCGVHFMAETADILTSDEQIVILPDMRAGCSMADMAEIEQVERAWPILQQLFGDTILPLTYVNSTAAIKAFVGVHGGATVTSSNAKKMVAWAFTQKERIFFLPDQHLGRNTAYDLGVPLEQMAVWDPITNTLQYEGDVQQIKVILWKGHCSVHENFTVKHIEHIRKTKPDMKIIVHPECSWEVVQQADDAGSTKYIIETIANAPAGSKWAIGTEMNLVNRIIQQHPDKEIVSLNPYMCPCLTMNRIDLPHLLWALESLLEGKVVNRITVPKDVAEGAMLALERMLARA.

2 residues coordinate iminosuccinate: histidine 45 and serine 62. Cysteine 109 contributes to the [4Fe-4S] cluster binding site. Iminosuccinate contacts are provided by residues 140–142 (YVN) and serine 161. Residue cysteine 229 participates in [4Fe-4S] cluster binding. Iminosuccinate is bound by residues 255–257 (HPE) and threonine 272. A [4Fe-4S] cluster-binding site is contributed by cysteine 319.

It belongs to the quinolinate synthase family. Type 3 subfamily. Requires [4Fe-4S] cluster as cofactor.

The protein resides in the cytoplasm. The catalysed reaction is iminosuccinate + dihydroxyacetone phosphate = quinolinate + phosphate + 2 H2O + H(+). The protein operates within cofactor biosynthesis; NAD(+) biosynthesis; quinolinate from iminoaspartate: step 1/1. In terms of biological role, catalyzes the condensation of iminoaspartate with dihydroxyacetone phosphate to form quinolinate. In Anoxybacillus flavithermus (strain DSM 21510 / WK1), this protein is Quinolinate synthase.